The sequence spans 256 residues: Tryptophan synthase alpha chain (256 aa).

Active-site proton acceptor residues include Glu48 and Asp59.

It belongs to the TrpA family. As to quaternary structure, tetramer of two alpha and two beta chains.

The catalysed reaction is (1S,2R)-1-C-(indol-3-yl)glycerol 3-phosphate + L-serine = D-glyceraldehyde 3-phosphate + L-tryptophan + H2O. It functions in the pathway amino-acid biosynthesis; L-tryptophan biosynthesis; L-tryptophan from chorismate: step 5/5. In terms of biological role, the alpha subunit is responsible for the aldol cleavage of indoleglycerol phosphate to indole and glyceraldehyde 3-phosphate. This is Tryptophan synthase alpha chain from Caldicellulosiruptor bescii (strain ATCC BAA-1888 / DSM 6725 / KCTC 15123 / Z-1320) (Anaerocellum thermophilum).